The chain runs to 320 residues: NAC domain-containing protein 20 (320 aa).

In terms of domain architecture, NAC spans 14–170 (LPPGFRFHPT…DWAVCRIFHK (157 aa)). Residues 114 to 176 (IGMKKTLVFY…IFHKSSGIKK (63 aa)) mediate DNA binding.

Forms homodimers. Forms heterodimers with NAC26. As to expression, expressed in developing seeds. Expressed in developing endosperm.

It localises to the nucleus. Its subcellular location is the endoplasmic reticulum. Functionally, transcription factor that acts redundantly with NAC26 to regulate the expression of genes involved in the biosynthesis of starch and storage proteins in grain. Directly binds to the promoters of starch synthase 1 (SS1), pullulanase (PUL), glutelin A1 (GLUA1), glutelins B4 and B5 (GLUB4 and GLUB5), alpha-globulin and 16 kDa prolamin, and activates their expression. This is NAC domain-containing protein 20 from Oryza sativa subsp. japonica (Rice).